The sequence spans 633 residues: Sodium- and chloride-dependent glycine transporter 1 (633 aa).

The Cytoplasmic segment spans residues 1–30 (MGLCVNGAVPSEATKKDENLKRGNWGNQIE). 3 helical membrane-spanning segments follow: residues 31–51 (FVLTSVGYAVGLGNVWRFPYL), 58–78 (GAFMFPYFIMLIFCGIPLFFM), and 113–133 (YIGIYYNVVICIAFYYFFASM). Over 134–208 (NRVLPWTYCN…ISEDIGDFGE (75 aa)) the chain is Extracellular. N-linked (GlcNAc...) asparagine glycosylation is found at Asn-158, Asn-164, Asn-173, and Asn-179. 9 helical membrane passes run 209-229 (VQLPLLGCLGVSWLVVFLCLI), 238-258 (VVYFTATFPYVVLTILFIRGI), 283-303 (VWGDAASQIFYSLGCAWGGLI), 330-350 (SVYAGFVIFSILGFMATHLGV), 373-393 (LLPISPLWSILFFFMLILLGL), 429-449 (IIGFLLGIPLTTQAGIYWLLL), 453-473 (YAASFSLVIISCIMCIAVMYI), 493-513 (LFFQICWRFISPGIIFFILIF), and 533-553 (ITIGFLMALSSVICIPLYAIF). Residues 554–633 (KIWCSEGDTF…GQAHTQDSKV (80 aa)) lie on the Cytoplasmic side of the membrane. Positions 588 to 633 (RYAQMSSTRSESNPEAQPLNPEKMKEDLSLTIQGSNGQAHTQDSKV) are disordered. Polar residues-rich tracts occupy residues 591-602 (QMSSTRSESNPE) and 617-633 (LTIQGSNGQAHTQDSKV).

It belongs to the sodium:neurotransmitter symporter (SNF) (TC 2.A.22) family. SLC6A9 subfamily. As to expression, first expressed in early tailbud stage embryos in the midbrain and anterior spinal cord, and weakly in the hindbrain. By late tailbud stages, expression extends posteriorly in the spinal cord to appear in between somites. Expressed in the forebrain, retina, between the somites and in the blood islands by the swimming tadpole stages.

The protein localises to the cell membrane. The catalysed reaction is glycine(out) + chloride(out) + 2 Na(+)(out) = glycine(in) + chloride(in) + 2 Na(+)(in). Functionally, sodium- and chloride-dependent glycine transporter which is essential for regulating glycine concentrations at inhibitory glycinergic synapses. The protein is Sodium- and chloride-dependent glycine transporter 1 of Xenopus laevis (African clawed frog).